Consider the following 101-residue polypeptide: Large ribosomal subunit protein uL24 (101 aa).

The protein belongs to the universal ribosomal protein uL24 family. In terms of assembly, part of the 50S ribosomal subunit.

One of two assembly initiator proteins, it binds directly to the 5'-end of the 23S rRNA, where it nucleates assembly of the 50S subunit. In terms of biological role, one of the proteins that surrounds the polypeptide exit tunnel on the outside of the subunit. This chain is Large ribosomal subunit protein uL24, found in Borrelia turicatae (strain 91E135).